Reading from the N-terminus, the 435-residue chain is Cell adhesion molecule 2 (435 aa).

The N-terminal stretch at 1 to 24 (MIWKRSAVLRFYSVCGLLLQGSQG) is a signal peptide. Residues 25–367 (QFPLTQNVTV…SLAGQNGPDH (343 aa)) are Extracellular-facing. The Ig-like V-type domain occupies 27–119 (PLTQNVTVVE…PVKTSKAYLT (93 aa)). Asn31 and Asn51 each carry an N-linked (GlcNAc...) asparagine glycan. Cystine bridges form between Cys44/Cys104, Cys146/Cys203, and Cys248/Cys296. Ig-like C2-type domains lie at 127–219 (PQIS…VAMQ) and 227–312 (PSVK…YVLI). The N-linked (GlcNAc...) asparagine glycan is linked to Asn291. Residues 337–351 (SVTITTSPSTSASSS) show a composition bias toward low complexity. The segment at 337–360 (SVTITTSPSTSASSSSRRDPNSLA) is disordered. The helical transmembrane segment at 368-388 (ALIGGIVAVVVFVTLCSIFLL) threads the bilayer. At 389–435 (GRYLARHKGTYLTNEAKGAEDAPDADTAIINAEGSQVNAEEKKEYFI) the chain is on the cytoplasmic side. Phosphoserine is present on Ser423.

This sequence belongs to the nectin family. In terms of processing, glycosylation at Asn-51 reduces adhesive binding.

It is found in the cell membrane. Its subcellular location is the synapse. The protein resides in the cell projection. The protein localises to the axon. Its function is as follows. Adhesion molecule that engages in homo- and heterophilic interactions with the other nectin-like family members, leading to cell aggregation. Important for synapse organization, providing regulated trans-synaptic adhesion. Preferentially binds to oligodendrocytes. The chain is Cell adhesion molecule 2 (Cadm2) from Mus musculus (Mouse).